The primary structure comprises 1755 residues: Transposon Ty1-JR1 Gag-Pol polyprotein (1755 aa).

Residues Met1–Ser16 are compositionally biased toward low complexity. Disordered regions lie at residues Met1–Gln93, Pro126–Pro173, and Gly352–Thr421. 2 stretches are compositionally biased toward polar residues: residues Thr48 to Ser60 and Gln127 to Phe152. Residues Thr153–Thr165 are compositionally biased toward low complexity. Residues Asn299 to His401 are RNA-binding. Residues Asn402 to Ser418 are compositionally biased toward low complexity. At Ser416 the chain carries Phosphoserine. Asp461 functions as the For protease activity; shared with dimeric partner in the catalytic mechanism. The integrase-type zinc finger-like stretch occupies residues Asn583–Cys640. Residues Asn660 to Pro835 form the Integrase catalytic domain. Mg(2+) contacts are provided by Asp671 and Asp736. Disordered regions lie at residues Ser956–Lys1087, Arg1092–Pro1111, and Asp1130–Glu1186. A compositionally biased stretch (low complexity) spans Ser960–Thr969. Over residues Ser1005–Thr1015 the composition is skewed to polar residues. Over residues Glu1038–Ser1053 the composition is skewed to basic and acidic residues. Composition is skewed to polar residues over residues Tyr1054 to Asp1082 and Pro1101 to Pro1111. A Bipartite nuclear localization signal motif is present at residues Lys1178–Arg1212. The region spanning Asn1338–Gln1476 is the Reverse transcriptase Ty1/copia-type domain. 6 residues coordinate Mg(2+): Asp1346, Asp1427, Asp1428, Asp1610, Glu1652, and Asp1685. The RNase H Ty1/copia-type domain maps to Asp1610–Lys1752.

As to quaternary structure, the capsid protein forms a homotrimer, from which the VLPs are assembled. The protease is a homodimer, whose active site consists of two apposed aspartic acid residues. Post-translationally, initially, virus-like particles (VLPs) are composed of the structural unprocessed proteins Gag and Gag-Pol, and also contain the host initiator methionine tRNA (tRNA(i)-Met) which serves as a primer for minus-strand DNA synthesis, and a dimer of genomic Ty RNA. Processing of the polyproteins occurs within the particle and proceeds by an ordered pathway, called maturation. First, the protease (PR) is released by autocatalytic cleavage of the Gag-Pol polyprotein yielding capsid protein p45 and a Pol-p154 precursor protein. This cleavage is a prerequisite for subsequent processing of Pol-p154 at the remaining sites to release the mature structural and catalytic proteins. Maturation takes place prior to the RT reaction and is required to produce transposition-competent VLPs.

The protein resides in the cytoplasm. Its subcellular location is the nucleus. It carries out the reaction DNA(n) + a 2'-deoxyribonucleoside 5'-triphosphate = DNA(n+1) + diphosphate. The enzyme catalyses Endonucleolytic cleavage to 5'-phosphomonoester.. Functionally, capsid protein (CA) is the structural component of the virus-like particle (VLP), forming the shell that encapsulates the retrotransposons dimeric RNA genome. The particles are assembled from trimer-clustered units and there are holes in the capsid shells that allow for the diffusion of macromolecules. CA also has nucleocapsid-like chaperone activity, promoting primer tRNA(i)-Met annealing to the multipartite primer-binding site (PBS), dimerization of Ty1 RNA and initiation of reverse transcription. The aspartyl protease (PR) mediates the proteolytic cleavages of the Gag and Gag-Pol polyproteins after assembly of the VLP. In terms of biological role, reverse transcriptase/ribonuclease H (RT) is a multifunctional enzyme that catalyzes the conversion of the retro-elements RNA genome into dsDNA within the VLP. The enzyme displays a DNA polymerase activity that can copy either DNA or RNA templates, and a ribonuclease H (RNase H) activity that cleaves the RNA strand of RNA-DNA heteroduplexes during plus-strand synthesis and hydrolyzes RNA primers. The conversion leads to a linear dsDNA copy of the retrotransposon that includes long terminal repeats (LTRs) at both ends. Its function is as follows. Integrase (IN) targets the VLP to the nucleus, where a subparticle preintegration complex (PIC) containing at least integrase and the newly synthesized dsDNA copy of the retrotransposon must transit the nuclear membrane. Once in the nucleus, integrase performs the integration of the dsDNA into the host genome. In Saccharomyces cerevisiae (strain ATCC 204508 / S288c) (Baker's yeast), this protein is Transposon Ty1-JR1 Gag-Pol polyprotein (TY1B-JR1).